The sequence spans 293 residues: Probable porphobilinogen deaminase (293 aa).

Position 233 is an S-(dipyrrolylmethanemethyl)cysteine (cysteine 233).

It belongs to the HMBS family. Dipyrromethane serves as cofactor.

It catalyses the reaction 4 porphobilinogen + H2O = hydroxymethylbilane + 4 NH4(+). It functions in the pathway porphyrin-containing compound metabolism; protoporphyrin-IX biosynthesis; coproporphyrinogen-III from 5-aminolevulinate: step 2/4. Tetrapolymerization of the monopyrrole PBG into the hydroxymethylbilane pre-uroporphyrinogen in several discrete steps. This Saccharolobus islandicus (strain Y.N.15.51 / Yellowstone #2) (Sulfolobus islandicus) protein is Probable porphobilinogen deaminase.